The chain runs to 442 residues: Methylenetetrahydrofolate--tRNA-(uracil-5-)-methyltransferase TrmFO 1 (442 aa).

Residue 9 to 14 (GAGLAG) coordinates FAD.

It belongs to the MnmG family. TrmFO subfamily. FAD is required as a cofactor.

The protein resides in the cytoplasm. The enzyme catalyses uridine(54) in tRNA + (6R)-5,10-methylene-5,6,7,8-tetrahydrofolate + NADH + H(+) = 5-methyluridine(54) in tRNA + (6S)-5,6,7,8-tetrahydrofolate + NAD(+). It catalyses the reaction uridine(54) in tRNA + (6R)-5,10-methylene-5,6,7,8-tetrahydrofolate + NADPH + H(+) = 5-methyluridine(54) in tRNA + (6S)-5,6,7,8-tetrahydrofolate + NADP(+). Catalyzes the folate-dependent formation of 5-methyl-uridine at position 54 (M-5-U54) in all tRNAs. The protein is Methylenetetrahydrofolate--tRNA-(uracil-5-)-methyltransferase TrmFO 1 of Mesoplasma florum (strain ATCC 33453 / NBRC 100688 / NCTC 11704 / L1) (Acholeplasma florum).